The primary structure comprises 230 residues: Cytidylate kinase (230 aa).

12–20 (GPSGAGKGT) contributes to the ATP binding site.

Belongs to the cytidylate kinase family. Type 1 subfamily.

The protein resides in the cytoplasm. The enzyme catalyses CMP + ATP = CDP + ADP. The catalysed reaction is dCMP + ATP = dCDP + ADP. This is Cytidylate kinase from Shewanella pealeana (strain ATCC 700345 / ANG-SQ1).